The sequence spans 125 residues: Translation initiation factor 5A (125 aa).

K35 carries the hypusine modification.

Belongs to the eIF-5A family.

Its subcellular location is the cytoplasm. Functions by promoting the formation of the first peptide bond. The protein is Translation initiation factor 5A (eIF5A) of Methanosphaerula palustris (strain ATCC BAA-1556 / DSM 19958 / E1-9c).